A 297-amino-acid polypeptide reads, in one-letter code: Protoheme IX farnesyltransferase 1 (297 aa).

A run of 9 helical transmembrane segments spans residues 23–43, 45–65, 93–113, 117–137, 145–165, 171–191, 216–236, 241–261, and 277–297; these read VVVLMLITSLVGMFLATRAGV, WSVLLFGNLGIALCAGGAAAV, LPALLFALALALLGMALLLMF, LTAWLTLASLLGYAVLYTGFL, IVIGGLAGAAPPLLGWVAVSG, PLLLVLIIFAWTPPHFWALAI, LHILLYTLILLAVTLLPYAIH, LYLVCALALGLRFLQWAWVLY, and IGYLFALFIALLVDHYLLLNL.

This sequence belongs to the UbiA prenyltransferase family. Protoheme IX farnesyltransferase subfamily.

The protein resides in the cell inner membrane. It carries out the reaction heme b + (2E,6E)-farnesyl diphosphate + H2O = Fe(II)-heme o + diphosphate. It participates in porphyrin-containing compound metabolism; heme O biosynthesis; heme O from protoheme: step 1/1. Converts heme B (protoheme IX) to heme O by substitution of the vinyl group on carbon 2 of heme B porphyrin ring with a hydroxyethyl farnesyl side group. This chain is Protoheme IX farnesyltransferase 1, found in Pseudomonas putida (strain W619).